Reading from the N-terminus, the 300-residue chain is MDLPPQLSFALYVSAFALGFPLNLLAIRGAVSHAKLRLTPSLVYTLHLGCSDLLLAITLPLKAVEALASGAWPLPLPFCPVFALAHFAPLYAGGGFLAALSAGRYLGAAFPFGYQAIRRPRYSWGVCVAIWALVLCHLGLALGLETSGSWLDNSTSSLGINIPVNGSPVCLEAWDPDSARPARLSFSILLFFLPLVITAFCYVGCLRALVRSGLSHKRKLRAAWVAGGALLTLLLCLGPYNASNVASFINPDLGGSWRKLGLITGAWSVVLNPLVTGYLGTGPGRGTICVTRTQRGTIQK.

The Extracellular segment spans residues 1–8; it reads MDLPPQLS. A helical transmembrane segment spans residues 9-31; that stretch reads FALYVSAFALGFPLNLLAIRGAV. Residues 32–41 lie on the Cytoplasmic side of the membrane; it reads SHAKLRLTPS. Residues 42-64 traverse the membrane as a helical segment; it reads LVYTLHLGCSDLLLAITLPLKAV. The Extracellular portion of the chain corresponds to 65–79; the sequence is EALASGAWPLPLPFC. Cys79 and Cys170 form a disulfide bridge. The chain crosses the membrane as a helical span at residues 80-101; the sequence is PVFALAHFAPLYAGGGFLAALS. Residues 102 to 121 lie on the Cytoplasmic side of the membrane; sequence AGRYLGAAFPFGYQAIRRPR. A helical membrane pass occupies residues 122–142; the sequence is YSWGVCVAIWALVLCHLGLAL. Residues 143 to 178 lie on the Extracellular side of the membrane; sequence GLETSGSWLDNSTSSLGINIPVNGSPVCLEAWDPDS. Residue Asn153 is glycosylated (N-linked (GlcNAc...) asparagine). A helical transmembrane segment spans residues 179–200; it reads ARPARLSFSILLFFLPLVITAF. Residues 201 to 223 lie on the Cytoplasmic side of the membrane; the sequence is CYVGCLRALVRSGLSHKRKLRAA. The helical transmembrane segment at 224–248 threads the bilayer; the sequence is WVAGGALLTLLLCLGPYNASNVASF. Over 249-256 the chain is Extracellular; the sequence is INPDLGGS. The chain crosses the membrane as a helical span at residues 257–279; the sequence is WRKLGLITGAWSVVLNPLVTGYL. Residues 280–300 lie on the Cytoplasmic side of the membrane; that stretch reads GTGPGRGTICVTRTQRGTIQK.

It belongs to the G-protein coupled receptor 1 family. In terms of tissue distribution, expressed in pancreatic islet beta cells (at protein level). Expressed in pancreatic islet beta cells.

The protein localises to the cell membrane. Is also activated by synthetic agonists, such as AM-8182, AM-6331 and TAK-875 (fasiglifam). AM-8182 is a full agonist, while AM-6331 and TAK-875 (fasiglifam) are partial agonists that potentiate the activity of the endogenous ligands, such as alpha-linolenic acid and gamma-linolenic acid. Functionally, G-protein coupled receptor for medium and long chain saturated and unsaturated fatty acids that plays an important role in glucose homeostasis. Fatty acid binding increases glucose-stimulated insulin secretion, and may also enhance the secretion of glucagon-like peptide 1 (GLP-1). May also play a role in bone homeostasis; receptor signaling activates pathways that inhibit osteoclast differentiation. Ligand binding leads to a conformation change that triggers signaling via G-proteins that activate phospholipase C, leading to an increase of the intracellular calcium concentration. Seems to act through a G(q) and G(i)-mediated pathway. Mediates the anti-inflammatory effects of omega-3 polyunsaturated fatty acids (PUFAs) via inhibition of NLRP3 inflammasome activation. The protein is Free fatty acid receptor 1 (Ffar1) of Mus musculus (Mouse).